The primary structure comprises 361 residues: tRNA-specific 2-thiouridylase MnmA (361 aa).

Residues 6 to 13 (AMSGGVDS) and Leu32 each bind ATP. Residue Cys99 is the Nucleophile of the active site. Cys99 and Cys196 form a disulfide bridge. Gly123 is an ATP binding site. The interval 145–147 (RDQ) is interaction with tRNA. Catalysis depends on Cys196, which acts as the Cysteine persulfide intermediate.

The protein belongs to the MnmA/TRMU family.

The protein localises to the cytoplasm. It catalyses the reaction S-sulfanyl-L-cysteinyl-[protein] + uridine(34) in tRNA + AH2 + ATP = 2-thiouridine(34) in tRNA + L-cysteinyl-[protein] + A + AMP + diphosphate + H(+). In terms of biological role, catalyzes the 2-thiolation of uridine at the wobble position (U34) of tRNA, leading to the formation of s(2)U34. In Gluconobacter oxydans (strain 621H) (Gluconobacter suboxydans), this protein is tRNA-specific 2-thiouridylase MnmA.